A 231-amino-acid chain; its full sequence is NAD(+) ADP-ribosyltransferase (231 aa).

The catalysed reaction is NAD(+) + (ADP-D-ribosyl)n-acceptor = nicotinamide + (ADP-D-ribosyl)n+1-acceptor + H(+).. Its activity is regulated as follows. Activity increases up to 5-6 times with Mg(2+) at 50 uM or higher ion concentration. 3-aminobenzamide (3-ABA) inhibits the activity by up to half and nicotinamide to a lesser extent. Zn(2+) inhibits the activity to half-maximal rate but at 500 uM concentration of the ion. In terms of biological role, catalyzes auto- and hetero-ADP ribosylation and produces short oligomers by elongating the ADP-ribose chain (up to 6-mer). Binds DNA non-specifically but with high affinity. Forms very stable complexes with circular DNA wherein the circular DNA confers thermostability compared to linear DNA. The polypeptide is NAD(+) ADP-ribosyltransferase (Saccharolobus solfataricus (Sulfolobus solfataricus)).